A 153-amino-acid polypeptide reads, in one-letter code: Cytochrome c-type biogenesis protein CcmE (153 aa).

Over 1-6 the chain is Cytoplasmic; sequence MNARRR. The helical; Signal-anchor for type II membrane protein transmembrane segment at 7-27 threads the bilayer; that stretch reads LWSLLMLILAVGTAATLTIMA. Topologically, residues 28-153 are periplasmic; sequence LRRNLTYLYM…LDTPIAQTTP (126 aa). Histidine 121 and tyrosine 125 together coordinate heme. Over residues 130 to 141 the composition is skewed to polar residues; sequence LTNKMQPTPTQH. Residues 130 to 153 are disordered; that stretch reads LTNKMQPTPTQHTHLDTPIAQTTP.

It belongs to the CcmE/CycJ family.

Its subcellular location is the cell inner membrane. Heme chaperone required for the biogenesis of c-type cytochromes. Transiently binds heme delivered by CcmC and transfers the heme to apo-cytochromes in a process facilitated by CcmF and CcmH. This Xylella fastidiosa (strain 9a5c) protein is Cytochrome c-type biogenesis protein CcmE.